Reading from the N-terminus, the 194-residue chain is Endoribonuclease YbeY (194 aa).

Zn(2+)-binding residues include His127, His131, and Asp137. The tract at residues 162–194 (PLSNDEDSAPEQDDSFDDDASDSSGGIMSGGVS) is disordered. The segment covering 165-182 (NDEDSAPEQDDSFDDDAS) has biased composition (acidic residues).

It belongs to the endoribonuclease YbeY family. It depends on Zn(2+) as a cofactor.

It is found in the cytoplasm. Its function is as follows. Single strand-specific metallo-endoribonuclease involved in late-stage 70S ribosome quality control and in maturation of the 3' terminus of the 16S rRNA. This chain is Endoribonuclease YbeY, found in Rhodopirellula baltica (strain DSM 10527 / NCIMB 13988 / SH1).